We begin with the raw amino-acid sequence, 229 residues long: Extracellular endonuclease (229 aa).

Positions 1 to 19 (MSARFIAVFCLFFTVTAHA) are cleaved as a signal peptide. Residues 69–95 (RADASNGNTSSRPGRSGISASAGKPVG) are disordered. Positions 71 to 81 (DASNGNTSSRP) are enriched in polar residues.

Belongs to the EndA/NucM nuclease family.

The protein resides in the secreted. This chain is Extracellular endonuclease (endX), found in Pseudomonas fluorescens biotype A.